Here is a 428-residue protein sequence, read N- to C-terminus: Phosphomethylpyrimidine synthase (428 aa).

Substrate contacts are provided by residues N66, M94, Y123, H162, 184 to 186 (SRG), 225 to 228 (DALR), and E264. H268 is a Zn(2+) binding site. Y291 lines the substrate pocket. H332 is a Zn(2+) binding site. 3 residues coordinate [4Fe-4S] cluster: C408, C411, and C415.

Belongs to the ThiC family. It depends on [4Fe-4S] cluster as a cofactor.

It catalyses the reaction 5-amino-1-(5-phospho-beta-D-ribosyl)imidazole + S-adenosyl-L-methionine = 4-amino-2-methyl-5-(phosphooxymethyl)pyrimidine + CO + 5'-deoxyadenosine + formate + L-methionine + 3 H(+). The protein operates within cofactor biosynthesis; thiamine diphosphate biosynthesis. Its function is as follows. Catalyzes the synthesis of the hydroxymethylpyrimidine phosphate (HMP-P) moiety of thiamine from aminoimidazole ribotide (AIR) in a radical S-adenosyl-L-methionine (SAM)-dependent reaction. This chain is Phosphomethylpyrimidine synthase, found in Sulfolobus acidocaldarius (strain ATCC 33909 / DSM 639 / JCM 8929 / NBRC 15157 / NCIMB 11770).